The chain runs to 673 residues: Methionine--tRNA ligase (673 aa).

Residues 13 to 23 (PYTNGFCHLGH) carry the 'HIGH' region motif. Residues C144, C147, C156, and C160 each coordinate Zn(2+). Positions 325–329 (KFSKS) match the 'KMSKS' region motif. ATP is bound at residue K328. The 99-residue stretch at 575–673 (DVAKLDLRVG…KDVPEGTKVH (99 aa)) folds into the tRNA-binding domain.

The protein belongs to the class-I aminoacyl-tRNA synthetase family. MetG type 1 subfamily. As to quaternary structure, homodimer. Zn(2+) is required as a cofactor.

The protein localises to the cytoplasm. The catalysed reaction is tRNA(Met) + L-methionine + ATP = L-methionyl-tRNA(Met) + AMP + diphosphate. Its function is as follows. Is required not only for elongation of protein synthesis but also for the initiation of all mRNA translation through initiator tRNA(fMet) aminoacylation. The protein is Methionine--tRNA ligase of Methanocorpusculum labreanum (strain ATCC 43576 / DSM 4855 / Z).